The sequence spans 327 residues: Acyl-CoA desaturase (327 aa).

Residues 1 to 39 (MPDREIKSPIWHPEPGTVEDVFDHTYKEKEGPKPPTVIV) lie on the Cytoplasmic side of the membrane. Residues 40–60 (WRNVILMSLLHLGALYGLFLF) form a helical membrane-spanning segment. Asparagine 42 lines the substrate pocket. The Lumenal segment spans residues 61-64 (PSAR). The helical transmembrane segment at 65 to 85 (ALTWIWFFGCLLFSALGITAG) threads the bilayer. At 86 to 184 (AHRLWSHRSY…DKVVMFQRRF (99 aa)) the chain is on the cytoplasmic side. Residues histidine 87 and histidine 92 each coordinate Fe cation. The Histidine box-1 motif lies at 87-92 (HRLWSH). Asparagine 115, arginine 122, and aspartate 123 together coordinate substrate. Fe cation is bound by residues histidine 124, histidine 127, and histidine 128. A Histidine box-2 motif is present at residues 124-128 (HRVHH). Substrate-binding residues include arginine 155 and lysine 156. Residues 185–204 (YKPSVLLMCFFVPTFVPWYV) form a helical membrane-spanning segment. Residues 205–208 (WGES) are Lumenal-facing. The chain crosses the membrane as a helical span at residues 209–230 (LWVAYFVPALLRYALVLNATWL). Tryptophan 229 provides a ligand contact to substrate. Residues 231–327 (VNSAAHMWGN…RTGDGSHWSG (97 aa)) lie on the Cytoplasmic side of the membrane. Residues histidine 236, histidine 265, histidine 268, and histidine 269 each contribute to the Fe cation site. The short motif at 265 to 269 (HNYHH) is the Histidine box-3 element.

The protein belongs to the fatty acid desaturase type 1 family. The cofactor is Fe(2+).

It is found in the endoplasmic reticulum membrane. It carries out the reaction octadecanoyl-CoA + 2 Fe(II)-[cytochrome b5] + O2 + 2 H(+) = (9Z)-octadecenoyl-CoA + 2 Fe(III)-[cytochrome b5] + 2 H2O. Stearoyl-CoA desaturase that utilizes O(2) and electrons from reduced cytochrome b5 to introduce the first double bond into saturated fatty acyl-CoA substrates. Has high specificity and catalyzes the insertion of a cis double bond at the delta-9 position into fatty acyl-CoA substrates including palmitoyl-CoA and stearoyl-CoA. Contributes to the biosynthesis of membrane phospholipids, cholesterol esters and triglycerides. The chain is Acyl-CoA desaturase from Cyprinus carpio (Common carp).